The primary structure comprises 207 residues: Large ribosomal subunit protein uL4 (207 aa).

The disordered stretch occupies residues 45–80 (RQGTHAVKNRSEVRGGGRKPWRQKGTGRARQGSTRS). The segment covering 60 to 71 (GGRKPWRQKGTG) has biased composition (basic residues).

The protein belongs to the universal ribosomal protein uL4 family. As to quaternary structure, part of the 50S ribosomal subunit.

Functionally, one of the primary rRNA binding proteins, this protein initially binds near the 5'-end of the 23S rRNA. It is important during the early stages of 50S assembly. It makes multiple contacts with different domains of the 23S rRNA in the assembled 50S subunit and ribosome. Its function is as follows. Forms part of the polypeptide exit tunnel. The polypeptide is Large ribosomal subunit protein uL4 (Oceanobacillus iheyensis (strain DSM 14371 / CIP 107618 / JCM 11309 / KCTC 3954 / HTE831)).